Consider the following 67-residue polypeptide: Bowman-Birk type major trypsin inhibitor (67 aa).

Cystine bridges form between Cys8–Cys63, Cys9–Cys24, Cys14–Cys22, Cys31–Cys38, and Cys35–Cys51.

Belongs to the Bowman-Birk serine protease inhibitor family.

This Setaria italica (Foxtail millet) protein is Bowman-Birk type major trypsin inhibitor.